The following is a 245-amino-acid chain: Probable phosphatase KPN78578_10290 (245 aa).

Zn(2+) contacts are provided by H7, H9, H15, H40, E73, H101, H131, D192, and H194.

This sequence belongs to the PHP family. Homotrimer. Zn(2+) is required as a cofactor.

The sequence is that of Probable phosphatase KPN78578_10290 from Klebsiella pneumoniae subsp. pneumoniae (strain ATCC 700721 / MGH 78578).